The following is a 294-amino-acid chain: tRNA dimethylallyltransferase (294 aa).

10-17 (GPTAVGKT) provides a ligand contact to ATP. 12–17 (TAVGKT) is a substrate binding site. An interaction with substrate tRNA region spans residues 35–38 (DSQQ).

It belongs to the IPP transferase family. Monomer. Mg(2+) serves as cofactor.

The catalysed reaction is adenosine(37) in tRNA + dimethylallyl diphosphate = N(6)-dimethylallyladenosine(37) in tRNA + diphosphate. Its function is as follows. Catalyzes the transfer of a dimethylallyl group onto the adenine at position 37 in tRNAs that read codons beginning with uridine, leading to the formation of N6-(dimethylallyl)adenosine (i(6)A). The chain is tRNA dimethylallyltransferase from Streptococcus mutans serotype c (strain ATCC 700610 / UA159).